The sequence spans 562 residues: NAD-dependent malic enzyme (562 aa).

Tyr-101 (proton donor) is an active-site residue. Residue Arg-154 coordinates NAD(+). Residue Lys-172 is the Proton acceptor of the active site. The a divalent metal cation site is built by Glu-243, Asp-244, and Asp-267. Asp-267 and Asn-415 together coordinate NAD(+).

It belongs to the malic enzymes family. In terms of assembly, homotetramer. Mg(2+) is required as a cofactor. The cofactor is Mn(2+).

The catalysed reaction is (S)-malate + NAD(+) = pyruvate + CO2 + NADH. It catalyses the reaction oxaloacetate + H(+) = pyruvate + CO2. The sequence is that of NAD-dependent malic enzyme from Shewanella sp. (strain MR-4).